The following is a 144-amino-acid chain: D-aminoacyl-tRNA deacylase (144 aa).

The Gly-cisPro motif, important for rejection of L-amino acids signature appears at 136-137 (GP).

Belongs to the DTD family. Homodimer.

The protein resides in the cytoplasm. The enzyme catalyses glycyl-tRNA(Ala) + H2O = tRNA(Ala) + glycine + H(+). It catalyses the reaction a D-aminoacyl-tRNA + H2O = a tRNA + a D-alpha-amino acid + H(+). Functionally, an aminoacyl-tRNA editing enzyme that deacylates mischarged D-aminoacyl-tRNAs. Also deacylates mischarged glycyl-tRNA(Ala), protecting cells against glycine mischarging by AlaRS. Acts via tRNA-based rather than protein-based catalysis; rejects L-amino acids rather than detecting D-amino acids in the active site. By recycling D-aminoacyl-tRNA to D-amino acids and free tRNA molecules, this enzyme counteracts the toxicity associated with the formation of D-aminoacyl-tRNA entities in vivo and helps enforce protein L-homochirality. This chain is D-aminoacyl-tRNA deacylase, found in Actinobacillus succinogenes (strain ATCC 55618 / DSM 22257 / CCUG 43843 / 130Z).